Reading from the N-terminus, the 172-residue chain is Small ribosomal subunit protein uS5 (172 aa).

In terms of domain architecture, S5 DRBM spans 17–80 (MREKMIAVNR…EEARRKMIKV (64 aa)).

This sequence belongs to the universal ribosomal protein uS5 family. In terms of assembly, part of the 30S ribosomal subunit. Contacts proteins S4 and S8.

In terms of biological role, with S4 and S12 plays an important role in translational accuracy. Its function is as follows. Located at the back of the 30S subunit body where it stabilizes the conformation of the head with respect to the body. The protein is Small ribosomal subunit protein uS5 of Herminiimonas arsenicoxydans.